We begin with the raw amino-acid sequence, 163 residues long: Odorant-binding protein 1a (163 aa).

The signal sequence occupies residues 1–16 (MAKFLLLALTFGLAHA). Cystine bridges form between cysteine 50–cysteine 54 and cysteine 69–cysteine 161.

Belongs to the calycin superfamily. Lipocalin family. In terms of assembly, may form a heterodimer with OBP1B. In terms of processing, the N-terminus may be blocked. As to expression, expressed in nasal mucosa (at protein level). Specifically detected in septal and lateral nasal glands.

The protein resides in the secreted. Its function is as follows. Binds the chemical odorant 2-isobutyl-3-methoxypyrazine. The chain is Odorant-binding protein 1a from Mus musculus (Mouse).